The chain runs to 599 residues: MAAAPWLHLSRRRSSTQTSLRSFLICSSSFDSDEFISSQSRVIGGRGEEEVRFSGALFSRMIHSSTYHPYRQIPLPHSSVQLLDASLGCRGFSSGSSNVSDGCDEEVESECDNDEETGVSCVESSTNPEEVERVCKVIDELFALDRNMEAVLDEMKLDLSHDLIVEVLERFRHARKPAFRFFCWAAERQGFAHDSRTYNSMMSILAKTRQFETMVSVLEEMGTKGLLTMETFTIAMKAFAAAKERKKAVGIFELMKKYKFKIGVETINCLLDSLGRAKLGKEAQVLFDKLKERFTPNMMTYTVLLNGWCRVRNLIEAARIWNDMIDQGLKPDIVAHNVMLEGLLRSRKKSDAIKLFHVMKSKGPCPNVRSYTIMIRDFCKQSSMETAIEYFDDMVDSGLQPDAAVYTCLITGFGTQKKLDTVYELLKEMQEKGHPPDGKTYNALIKLMANQKMPEHATRIYNKMIQNEIEPSIHTFNMIMKSYFMARNYEMGRAVWEEMIKKGICPDDNSYTVLIRGLIGEGKSREACRYLEEMLDKGMKTPLIDYNKFAADFHRGGQPEIFEELAQRAKFSGKFAAAEIFARWAQMTRRRFKQRFMED.

The N-terminal 99 residues, 1–99 (MAAAPWLHLS…RGFSSGSSNV (99 aa)), are a transit peptide targeting the mitochondrion. 10 PPR repeats span residues 194 to 228 (DSRT…GLLT), 230 to 262 (ETFT…KFKI), 263 to 293 (GVET…LKER), 297 to 331 (NMMT…GLKP), 332 to 366 (DIVA…GPCP), 367 to 401 (NVRS…GLQP), 402 to 436 (DAAV…GHPP), 437 to 471 (DGKT…EIEP), 472 to 506 (SIHT…GICP), and 507 to 541 (DDNS…GMKT).

It belongs to the PPR family. P subfamily.

The protein localises to the mitochondrion. The protein is Pentatricopeptide repeat-containing protein At3g62470, mitochondrial of Arabidopsis thaliana (Mouse-ear cress).